A 264-amino-acid chain; its full sequence is Energy-coupling factor transporter ATP-binding protein EcfA1 (264 aa).

One can recognise an ABC transporter domain in the interval 2-234; sequence IQVENLSFSY…DEFNPFLIKI (233 aa). 34-41 contributes to the ATP binding site; sequence GKNGSGKS.

Belongs to the ABC transporter superfamily. Energy-coupling factor EcfA family. Forms a stable energy-coupling factor (ECF) transporter complex composed of 2 membrane-embedded substrate-binding proteins (S component), 2 ATP-binding proteins (A component) and 2 transmembrane proteins (T component).

It localises to the cell inner membrane. Functionally, ATP-binding (A) component of a common energy-coupling factor (ECF) ABC-transporter complex. Unlike classic ABC transporters this ECF transporter provides the energy necessary to transport a number of different substrates. The sequence is that of Energy-coupling factor transporter ATP-binding protein EcfA1 from Fusobacterium nucleatum subsp. nucleatum (strain ATCC 25586 / DSM 15643 / BCRC 10681 / CIP 101130 / JCM 8532 / KCTC 2640 / LMG 13131 / VPI 4355).